The following is a 206-amino-acid chain: Orotate phosphoribosyltransferase (206 aa).

5-phospho-alpha-D-ribose 1-diphosphate-binding positions include Arg114, Lys115, Lys118, His120, and 141–149 (EDVVTTGQS). Orotate-binding residues include Thr145 and Arg173.

It belongs to the purine/pyrimidine phosphoribosyltransferase family. PyrE subfamily. As to quaternary structure, homodimer. It depends on Mg(2+) as a cofactor.

It carries out the reaction orotidine 5'-phosphate + diphosphate = orotate + 5-phospho-alpha-D-ribose 1-diphosphate. The protein operates within pyrimidine metabolism; UMP biosynthesis via de novo pathway; UMP from orotate: step 1/2. In terms of biological role, catalyzes the transfer of a ribosyl phosphate group from 5-phosphoribose 1-diphosphate to orotate, leading to the formation of orotidine monophosphate (OMP). In Nostoc sp. (strain PCC 7120 / SAG 25.82 / UTEX 2576), this protein is Orotate phosphoribosyltransferase.